The primary structure comprises 364 residues: Probable dual-specificity RNA methyltransferase RlmN (364 aa).

The active-site Proton acceptor is the Glu106. In terms of domain architecture, Radical SAM core spans 112–351; the sequence is YPHRNTVCIS…CTVRDTRGRE (240 aa). Cys119 and Cys356 are oxidised to a cystine. [4Fe-4S] cluster-binding residues include Cys126, Cys130, and Cys133. Residues 177–178, Ser211, 234–236, and Asn313 each bind S-adenosyl-L-methionine; these read GE and SLH. Cys356 serves as the catalytic S-methylcysteine intermediate.

It belongs to the radical SAM superfamily. RlmN family. The cofactor is [4Fe-4S] cluster.

The protein resides in the cytoplasm. The enzyme catalyses adenosine(2503) in 23S rRNA + 2 reduced [2Fe-2S]-[ferredoxin] + 2 S-adenosyl-L-methionine = 2-methyladenosine(2503) in 23S rRNA + 5'-deoxyadenosine + L-methionine + 2 oxidized [2Fe-2S]-[ferredoxin] + S-adenosyl-L-homocysteine. The catalysed reaction is adenosine(37) in tRNA + 2 reduced [2Fe-2S]-[ferredoxin] + 2 S-adenosyl-L-methionine = 2-methyladenosine(37) in tRNA + 5'-deoxyadenosine + L-methionine + 2 oxidized [2Fe-2S]-[ferredoxin] + S-adenosyl-L-homocysteine. In terms of biological role, specifically methylates position 2 of adenine 2503 in 23S rRNA and position 2 of adenine 37 in tRNAs. This is Probable dual-specificity RNA methyltransferase RlmN from Mycolicibacterium paratuberculosis (strain ATCC BAA-968 / K-10) (Mycobacterium paratuberculosis).